A 1162-amino-acid polypeptide reads, in one-letter code: Integrin alpha-L (1162 aa).

An N-terminal signal peptide occupies residues 1–23 (MSFRIAGPRLLLLGLQLFAKAWS). Topologically, residues 24–1088 (YNLDTRPTQS…DLIHEKEMLH (1065 aa)) are extracellular. FG-GAP repeat units lie at residues 28–79 (TRPT…FCQP) and 80–138 (VSLH…GPML). C70 and C77 form a disulfide bridge. An N-linked (GlcNAc...) asparagine glycan is attached at N86. 2 disulfide bridges follow: C108-C126 and C147-C199. In terms of domain architecture, VWFA spans 153–325 (DLVFLFDGSQ…EKLKDLFTDL (173 aa)). N185 and N270 each carry an N-linked (GlcNAc...) asparagine glycan. 5 FG-GAP repeats span residues 336–387 (NRQD…GATF), 390–443 (QEPL…GGRW), 444–504 (NQTQ…LFEM), 505–561 (VSEL…GLSP), and 565–625 (QRIQ…FSPE). N444 carries N-linked (GlcNAc...) asparagine glycosylation. Ca(2+) contacts are provided by D466, D468, D470, E474, D528, N530, D532, D536, D588, D592, and D596. C651 and C705 form a disulfide bridge. N-linked (GlcNAc...) asparagine glycans are attached at residues N668, N696, N724, and N728. C768 and C774 are disulfide-bonded. A glycan (N-linked (GlcNAc...) asparagine) is linked at N777. C841 and C857 are disulfide-bonded. N-linked (GlcNAc...) asparagine glycosylation is found at N858, N881, N891, N900, and N928. Disulfide bonds link C994/C1010 and C1018/C1049. N1057 is a glycosylation site (N-linked (GlcNAc...) asparagine). A helical transmembrane segment spans residues 1089–1109 (VYVLSGIGGLVLLFLIFLALY). Over 1110 to 1162 (KVGFFKRNLKEKMEADGGVPNGSPPEDTDPLAVPGEETKDMGCLEPLRESDKD) the chain is Cytoplasmic. Positions 1112–1116 (GFFKR) match the GFFKR motif motif. The segment at 1124-1162 (ADGGVPNGSPPEDTDPLAVPGEETKDMGCLEPLRESDKD) is disordered. A compositionally biased stretch (basic and acidic residues) spans 1145–1162 (EETKDMGCLEPLRESDKD).

It belongs to the integrin alpha chain family. In terms of assembly, heterodimer of an alpha and a beta subunit. The ITGAL alpha subunit associates with the ITGB2 beta subunit. Interacts with THBD. Interacts with CD226. In resting T-cells, up to 40% of surface ITGAL is constitutively phosphorylated. Phosphorylation causes conformational changes needed for ligand binding and is necessary for the activation by some physiological agents. In terms of tissue distribution, leukocytes.

The protein localises to the cell membrane. Integrin ITGAL/ITGB2 is a receptor for ICAM1, ICAM2, ICAM3 and ICAM4. Integrin ITGAL/ITGB2 is a receptor for F11R. Integrin ITGAL/ITGB2 is a receptor for the secreted form of ubiquitin-like protein ISG15; the interaction is mediated by ITGAL. Involved in a variety of immune phenomena including leukocyte-endothelial cell interaction, cytotoxic T-cell mediated killing, and antibody dependent killing by granulocytes and monocytes. Contributes to natural killer cell cytotoxicity. Involved in leukocyte adhesion and transmigration of leukocytes including T-cells and neutrophils. Acts as a platform at the immunological synapse to translate TCR engagement and density of the ITGAL ligand ICAM1 into graded adhesion. Required for generation of common lymphoid progenitor cells in bone marrow, indicating the role in lymphopoiesis. Integrin ITGAL/ITGB2 in association with ICAM3, contributes to apoptotic neutrophil phagocytosis by macrophages. This chain is Integrin alpha-L, found in Mus musculus (Mouse).